The sequence spans 399 residues: MAKEKFSRNKPHVNIGTIGHVDHGKTTLTAAISAVLSRRGLAELKDYDNIDNAPEEKERGITIATSHIEYETENRHYAHVDCPGHADYVKNMITGAAQMDGAILVVSAADGPMPQTREHILLSRQVGVPYIVVFMNKADMVDDAELLELVEMEIRELLSEYDFPGDDTPIISGSALQALEEAKAGNDGEWSAKIMDLMAAVDSYIPTPVRATDKDFLMPIEDVFSISGRGTVVTGRIEKGIVKVGDTIEIVGIRDTQTTTVTGVEMFRKEMDQGEAGDNVGVLLRGTKKEDVERGMVLCKPKSITPHTKFEGEVYILTKEEGGRHTPFFNNYRPQFYVRTTDVTGSITLPEGTEMVMPGDNLKITVELINPVALEDGTRFAIREGGRTVGSGVVSKIIA.

Residues 10 to 209 (KPHVNIGTIG…AVDSYIPTPV (200 aa)) enclose the tr-type G domain. Residues 19–26 (GHVDHGKT) form a G1 region. Residue 19–26 (GHVDHGKT) coordinates GTP. A Mg(2+)-binding site is contributed by Thr26. The interval 60–64 (GITIA) is G2. The segment at 81–84 (DCPG) is G3. Residues 81-85 (DCPGH) and 136-139 (NKAD) contribute to the GTP site. The tract at residues 136–139 (NKAD) is G4. A G5 region spans residues 174-176 (SAL).

Belongs to the TRAFAC class translation factor GTPase superfamily. Classic translation factor GTPase family. EF-Tu/EF-1A subfamily. Monomer.

The protein resides in the cytoplasm. It carries out the reaction GTP + H2O = GDP + phosphate + H(+). Its function is as follows. GTP hydrolase that promotes the GTP-dependent binding of aminoacyl-tRNA to the A-site of ribosomes during protein biosynthesis. The polypeptide is Elongation factor Tu (Campylobacter fetus subsp. fetus (strain 82-40)).